Consider the following 622-residue polypeptide: UvrABC system protein C (622 aa).

The GIY-YIG domain maps to 13–92 (DKPGVYLMKN…IKKYRPRYNI (80 aa)). Residues 204–239 (KDIIRKLKEDMDTLSENMEFEKAAELRDKIFALEKI) form the UVR domain.

Belongs to the UvrC family. As to quaternary structure, interacts with UvrB in an incision complex.

It localises to the cytoplasm. The UvrABC repair system catalyzes the recognition and processing of DNA lesions. UvrC both incises the 5' and 3' sides of the lesion. The N-terminal half is responsible for the 3' incision and the C-terminal half is responsible for the 5' incision. The protein is UvrABC system protein C of Clostridium kluyveri (strain ATCC 8527 / DSM 555 / NBRC 12016 / NCIMB 10680 / K1).